The primary structure comprises 309 residues: Homoserine O-acetyltransferase (309 aa).

Cys148 serves as the catalytic Acyl-thioester intermediate. Substrate is bound by residues Lys169 and Ser198. His241 functions as the Proton acceptor in the catalytic mechanism. Glu243 is a catalytic residue. Arg255 contributes to the substrate binding site.

The protein belongs to the MetA family.

The protein localises to the cytoplasm. It carries out the reaction L-homoserine + acetyl-CoA = O-acetyl-L-homoserine + CoA. The protein operates within amino-acid biosynthesis; L-methionine biosynthesis via de novo pathway; O-acetyl-L-homoserine from L-homoserine: step 1/1. Functionally, transfers an acetyl group from acetyl-CoA to L-homoserine, forming acetyl-L-homoserine. In vitro, can also use propionyl-CoA as acyl donor. The chain is Homoserine O-acetyltransferase from Shouchella clausii (Alkalihalobacillus clausii).